Here is a 149-residue protein sequence, read N- to C-terminus: Transcriptional repressor NrdR (149 aa).

A zinc finger spans residues 3–34 (CPFCTAKDTKVIDSRLVGGGHQVRRRRECNDC). In terms of domain architecture, ATP-cone spans 49 to 139 (PRVIKQDGSR…VYRSFEDIRE (91 aa)).

This sequence belongs to the NrdR family. Zn(2+) serves as cofactor.

Its function is as follows. Negatively regulates transcription of bacterial ribonucleotide reductase nrd genes and operons by binding to NrdR-boxes. The polypeptide is Transcriptional repressor NrdR (Pseudoalteromonas translucida (strain TAC 125)).